The following is a 438-amino-acid chain: Serine hydroxymethyltransferase (438 aa).

Residues leucine 133 and 137 to 139 (GHL) each bind (6S)-5,6,7,8-tetrahydrofolate. Lysine 242 is modified (N6-(pyridoxal phosphate)lysine).

It belongs to the SHMT family. Homodimer. Requires pyridoxal 5'-phosphate as cofactor.

The protein resides in the cytoplasm. It catalyses the reaction (6R)-5,10-methylene-5,6,7,8-tetrahydrofolate + glycine + H2O = (6S)-5,6,7,8-tetrahydrofolate + L-serine. The protein operates within one-carbon metabolism; tetrahydrofolate interconversion. It functions in the pathway amino-acid biosynthesis; glycine biosynthesis; glycine from L-serine: step 1/1. Functionally, catalyzes the reversible interconversion of serine and glycine with tetrahydrofolate (THF) serving as the one-carbon carrier. This reaction serves as the major source of one-carbon groups required for the biosynthesis of purines, thymidylate, methionine, and other important biomolecules. Also exhibits THF-independent aldolase activity toward beta-hydroxyamino acids, producing glycine and aldehydes, via a retro-aldol mechanism. This is Serine hydroxymethyltransferase from Brucella melitensis biotype 2 (strain ATCC 23457).